The chain runs to 68 residues: Protein P34 (68 aa).

2 helical membrane-spanning segments follow: residues 4–24 and 41–61; these read FVGP…LAVL and GFSS…GFAM.

The protein localises to the virion membrane. This Acinetobacter calcoaceticus (Arthrobacter siderocapsulatus) protein is Protein P34 (XXXIV).